The sequence spans 161 residues: Nucleotide-binding protein amb3630 (161 aa).

Belongs to the YajQ family.

Its function is as follows. Nucleotide-binding protein. In Paramagnetospirillum magneticum (strain ATCC 700264 / AMB-1) (Magnetospirillum magneticum), this protein is Nucleotide-binding protein amb3630.